Here is a 487-residue protein sequence, read N- to C-terminus: Chromosomal replication initiator protein DnaA (487 aa).

The domain I, interacts with DnaA modulators stretch occupies residues 1–79; that stretch reads MPNSMWHQCL…QAPRVMMKVG (79 aa). Residues 78–138 form a disordered region; the sequence is VGSAPKPTDP…PAPKAQAERR (61 aa). A domain II region spans residues 79–150; that stretch reads GSAPKPTDPV…QVEGDIKHQS (72 aa). The tract at residues 151-367 is domain III, AAA+ region; that stretch reads FLNETFTFDT…GALRLVIANA (217 aa). ATP-binding residues include Gly-195, Gly-197, Lys-198, and Thr-199. A domain IV, binds dsDNA region spans residues 368–487; that stretch reads HFTGSEITPP…YQNFMRLLTT (120 aa).

This sequence belongs to the DnaA family. In terms of assembly, oligomerizes as a right-handed, spiral filament on DNA at oriC.

It localises to the cytoplasm. Plays an essential role in the initiation and regulation of chromosomal replication. ATP-DnaA binds to the origin of replication (oriC) to initiate formation of the DNA replication initiation complex once per cell cycle. Binds the DnaA box (a 9 base pair repeat at the origin) and separates the double-stranded (ds)DNA. Forms a right-handed helical filament on oriC DNA; dsDNA binds to the exterior of the filament while single-stranded (ss)DNA is stabiized in the filament's interior. The ATP-DnaA-oriC complex binds and stabilizes one strand of the AT-rich DNA unwinding element (DUE), permitting loading of DNA polymerase. After initiation quickly degrades to an ADP-DnaA complex that is not apt for DNA replication. Binds acidic phospholipids. In Marinobacter nauticus (strain ATCC 700491 / DSM 11845 / VT8) (Marinobacter aquaeolei), this protein is Chromosomal replication initiator protein DnaA.